The chain runs to 193 residues: MNTYKNSLNHFLNLVDCLEKIPNVGKKSAFKMAYHLGLENPYLALKITHALENALENLKTCSSCNALSESEVCEICSDESRQNSQLCMVLHPRDVFILEDLKDFLGRYYVLNSIEEVDFNALEKRLIEENIKEIIFAFPPTLANDSLMLYIEDKLQRFHLTFTKIAQGVPTGVNFENIDSVSLSRAFNSRIKA.

The C4-type zinc-finger motif lies at 61–76 (CSSCNALSESEVCEIC). Residues 84–170 (SQLCMVLHPR…TFTKIAQGVP (87 aa)) form the Toprim domain.

This sequence belongs to the RecR family.

In terms of biological role, may play a role in DNA repair. It seems to be involved in an RecBC-independent recombinational process of DNA repair. It may act with RecF and RecO. This chain is Recombination protein RecR, found in Helicobacter pylori (strain G27).